A 178-amino-acid polypeptide reads, in one-letter code: Protein GrpE (178 aa).

Positions 1–11 (MAEDQAPREET) are enriched in basic and acidic residues. The segment at 1 to 30 (MAEDQAPREETVEAPELTEAPEIDELETLR) is disordered.

This sequence belongs to the GrpE family. Homodimer.

It is found in the cytoplasm. Functionally, participates actively in the response to hyperosmotic and heat shock by preventing the aggregation of stress-denatured proteins, in association with DnaK and GrpE. It is the nucleotide exchange factor for DnaK and may function as a thermosensor. Unfolded proteins bind initially to DnaJ; upon interaction with the DnaJ-bound protein, DnaK hydrolyzes its bound ATP, resulting in the formation of a stable complex. GrpE releases ADP from DnaK; ATP binding to DnaK triggers the release of the substrate protein, thus completing the reaction cycle. Several rounds of ATP-dependent interactions between DnaJ, DnaK and GrpE are required for fully efficient folding. In Cereibacter sphaeroides (strain ATCC 17023 / DSM 158 / JCM 6121 / CCUG 31486 / LMG 2827 / NBRC 12203 / NCIMB 8253 / ATH 2.4.1.) (Rhodobacter sphaeroides), this protein is Protein GrpE.